A 158-amino-acid polypeptide reads, in one-letter code: C-type lectin lectoxin-Enh4 (158 aa).

Positions 1 to 23 (MGQFTVVSLGLLAMFLSLSGAKG) are cleaved as a signal peptide. Intrachain disulfides connect C26–C37, C54–C154, and C129–C146. Residues 33-155 (RNGVCNKLFP…CASLHPFICQ (123 aa)) enclose the C-type lectin domain. The Mannose-binding signature appears at 119–121 (EPN). E127, N142, and D143 together coordinate Ca(2+).

It belongs to the true venom lectin family. Expressed by the venom gland.

The protein resides in the secreted. Functionally, mannose-binding lectin which recognizes specific carbohydrate structures and agglutinates a variety of animal cells by binding to cell-surface glycoproteins and glycolipids. May be a calcium-dependent lectin. The polypeptide is C-type lectin lectoxin-Enh4 (Pseudoferania polylepis (Macleay's water snake)).